The following is a 117-amino-acid chain: Small ribosomal subunit protein bS6 (117 aa).

This sequence belongs to the bacterial ribosomal protein bS6 family.

Its function is as follows. Binds together with bS18 to 16S ribosomal RNA. This is Small ribosomal subunit protein bS6 from Porphyromonas gingivalis (strain ATCC BAA-308 / W83).